The chain runs to 398 residues: Lysophospholipid transporter LplT (398 aa).

11 helical membrane-spanning segments follow: residues 19–39 (VIAA…ATLA), 53–73 (ILQM…GQVA), 91–111 (LGAA…LVGI), 139–159 (LMEA…GVLA), 164–184 (IAAL…NLFI), 227–247 (LFWG…PVAL), 257–277 (YLNA…AKLV), 281–301 (TVAR…IFSL), 304–324 (ALLP…FFVV), 350–370 (GENS…LVGI), and 372–392 (VVAI…ALWI).

The protein belongs to the major facilitator superfamily. LplT (TC 2.A.1.42) family.

The protein localises to the cell inner membrane. Catalyzes the facilitated diffusion of 2-acyl-glycero-3-phosphoethanolamine (2-acyl-GPE) into the cell. The protein is Lysophospholipid transporter LplT of Citrobacter koseri (strain ATCC BAA-895 / CDC 4225-83 / SGSC4696).